Reading from the N-terminus, the 378-residue chain is Dihydroorotate dehydrogenase (quinone) (378 aa).

FMN-binding positions include 79–83 (PGYDK) and Thr103. Lys83 contributes to the substrate binding site. 128 to 132 (NRMGF) contributes to the substrate binding site. FMN is bound by residues Asn160 and Asn193. Substrate is bound at residue Asn193. The active-site Nucleophile is the Ser196. Asn198 provides a ligand contact to substrate. Lys231 and Thr259 together coordinate FMN. 260–261 (NT) is a substrate binding site. Residues Gly289, Gly318, and 339–340 (YT) each bind FMN.

This sequence belongs to the dihydroorotate dehydrogenase family. Type 2 subfamily. In terms of assembly, monomer. It depends on FMN as a cofactor.

Its subcellular location is the cell membrane. The catalysed reaction is (S)-dihydroorotate + a quinone = orotate + a quinol. It participates in pyrimidine metabolism; UMP biosynthesis via de novo pathway; orotate from (S)-dihydroorotate (quinone route): step 1/1. Functionally, catalyzes the conversion of dihydroorotate to orotate with quinone as electron acceptor. This is Dihydroorotate dehydrogenase (quinone) from Trichodesmium erythraeum (strain IMS101).